We begin with the raw amino-acid sequence, 537 residues long: Chaperonin GroEL 2 (537 aa).

ATP is bound by residues 29–32, 86–90, Gly-412, and Asp-495; these read TLGP and DGTTT.

The protein belongs to the chaperonin (HSP60) family. As to quaternary structure, forms a cylinder of 14 subunits composed of two heptameric rings stacked back-to-back. Interacts with the co-chaperonin GroES.

Its subcellular location is the cytoplasm. The catalysed reaction is ATP + H2O + a folded polypeptide = ADP + phosphate + an unfolded polypeptide.. Together with its co-chaperonin GroES, plays an essential role in assisting protein folding. The GroEL-GroES system forms a nano-cage that allows encapsulation of the non-native substrate proteins and provides a physical environment optimized to promote and accelerate protein folding. In Paenarthrobacter aurescens (strain TC1), this protein is Chaperonin GroEL 2.